A 300-amino-acid polypeptide reads, in one-letter code: Acetaldehyde dehydrogenase (300 aa).

Position 10-13 (10-13) interacts with NAD(+); that stretch reads SGNI. Residue Cys129 is the Acyl-thioester intermediate of the active site. Residues 160-168 and Asn271 contribute to the NAD(+) site; that span reads SAGPGTRKN.

The protein belongs to the acetaldehyde dehydrogenase family.

It carries out the reaction acetaldehyde + NAD(+) + CoA = acetyl-CoA + NADH + H(+). The polypeptide is Acetaldehyde dehydrogenase (Alkalilimnicola ehrlichii (strain ATCC BAA-1101 / DSM 17681 / MLHE-1)).